A 493-amino-acid polypeptide reads, in one-letter code: Dipeptide permease D (493 aa).

At 1 to 13 (MNKHASQPRAIYY) the chain is on the cytoplasmic side. Residues 14–34 (VVALQIWEYFSFYGMRALLIL) traverse the membrane as a helical segment. Over 35 to 48 (YLTNQLKYNDTHAY) the chain is Periplasmic. Residues 49 to 69 (ELFSAYCSLVYVTPILGGFLA) traverse the membrane as a helical segment. Over 70–77 (DKVLGNRM) the chain is Cytoplasmic. Residues 78–98 (AVMLGALLMAIGHVVLGASEI) traverse the membrane as a helical segment. The Periplasmic segment spans residues 99–100 (HP). A helical membrane pass occupies residues 101–121 (SFLYLSLAIIVCGYGLFKSNV). Residues 122 to 137 (SCLLGELYEPTDPRRD) lie on the Cytoplasmic side of the membrane. Residues 138–158 (GGFSLMYAAGNVGSIIAPIAC) form a helical membrane-spanning segment. Topologically, residues 159–166 (GYAQEEYS) are periplasmic. The helical transmembrane segment at 167–187 (WAMGFGLAAVGMIAGLVIFLC) threads the bilayer. The Cytoplasmic segment spans residues 188–211 (GNRHFTHTRGVNKKVLRATNFLLP). Residues 212–232 (NWGWLLVLLVATPALITILFW) form a helical membrane-spanning segment. Topologically, residues 233–234 (KE) are periplasmic. A helical transmembrane segment spans residues 235–255 (WSVYALIVATIIGLGVLAKIY). The Cytoplasmic portion of the chain corresponds to 256–266 (RKAENQKQRKE). A helical transmembrane segment spans residues 267 to 287 (LGLIVTLTFFSMLFWAFAQQG). Residues 288–311 (GSSISLYIDRFVNRDMFGYTVPTA) lie on the Periplasmic side of the membrane. A helical membrane pass occupies residues 312–332 (MFQSINAFAVMLCGVFLAWVV). The Cytoplasmic segment spans residues 333–343 (KESVAGNRTVR). A helical membrane pass occupies residues 344–364 (IWGKFALGLGLMSAGFCILTL). Residues 365 to 378 (SARWSAMYGHSSLP) lie on the Periplasmic side of the membrane. Residues 379-399 (LMVLGLAVMGFAELFIDPVAM) form a helical membrane-spanning segment. At 400–412 (SQITRIEIPGVTG) the chain is on the cytoplasmic side. Residues 413-433 (VLTGIYMLLSGAIANYLAGVI) traverse the membrane as a helical segment. At 434–461 (ADQTSQASFDASGAINYSINAYIEVFDQ) the chain is on the periplasmic side. A helical membrane pass occupies residues 462-482 (ITWGALACVGLVLMIWLYQAL). Topologically, residues 483-493 (KFRNRALALES) are cytoplasmic.

Belongs to the major facilitator superfamily. Proton-dependent oligopeptide transporter (POT/PTR) (TC 2.A.17) family. DtpD subfamily.

It localises to the cell inner membrane. Probable proton-dependent permease that transports dipeptides. In Escherichia coli (strain K12), this protein is Dipeptide permease D (dtpD).